The sequence spans 20 residues: Ranalexin-1Cb (20 aa).

Residues C14 and C20 are joined by a disulfide bond.

In terms of tissue distribution, expressed by the skin glands.

It localises to the secreted. Antibacterial activity against Gram-positive bacterium S.aureus and Gram-negative bacterium E.coli. Has activity against C.albicans. The protein is Ranalexin-1Cb of Lithobates clamitans (Green frog).